We begin with the raw amino-acid sequence, 696 residues long: MRLTTLWQNRSPGDRHLSTYFCFAAVRLLLVFVPQLGYVHPDEFFQSVEVMTGDHFRLEHTRTWEFNNSLPVRSIVLPFALLRIPWSFYEFVAECLKAWWQLELLGTYAYVVFPRLIYTLISFSNDYCLFRICRLYGLRFEIRLLAMGSSWILLVFGTRTFSNSLEMAMCSWLLCLVSECMLRTNTVVYKKEFLEEKYDKAESISERVRIWKLKNSLPAHNLQHLMAMSTICVAGVFNRPTFLLFGAPMVFFWLLRGMGTRSITFRDFNLRIALFCLCALPALVLFIFCDSLYYQHLTLGELHMMHLSIDNFVFTPWNFIKANLDSAQTASHGVHPCYVHLMVNMPMLFNVLALASLGAFAQLLLRFFRAEYQVLPRFQSIVSLMSGAIFVPLFFLSLINHQEPRFLLPVTFPLILLHAPKLITGFSAKYPFQKDHPLLRLFYDKLLSSKASGPYLLKIWYVSNVALTLFFGFIHQAGVYPLAADISHVIATKPAATHVHLITSHIYSLPLHLINIPSSRVLHFNRLTHQRYRRPRDFYMYEYGGLPLDSLLQKVKLISGSCEVKKSGPSRRRYKLYLAIPASLSADLHEALVHSNASSYLNFELLKVFYPHLSTEAFPHLQGRHPCDVDAPHWAHDDLRGTCSAEQLPAFSFAYLNKQFSSFVHQLGLALYEIDVTRNKPRSVVIKKASMTETAA.

6 helical membrane passes run 100-120 (WQLE…IYTL), 125-142 (NDYC…RFEI), 149-169 (SSWI…EMAM), 185-205 (NTVV…ESIS), 227-247 (AMST…LFGA), and 338-358 (YVHL…ASLG).

This sequence belongs to the glycosyltransferase 22 family. PIGZ subfamily.

It localises to the endoplasmic reticulum membrane. The protein operates within glycolipid biosynthesis; glycosylphosphatidylinositol-anchor biosynthesis. Its function is as follows. Mannosyltransferase involved in glycosylphosphatidylinositol-anchor biosynthesis. Transfers a fourth mannose to some trimannosyl-GPIs during GPI precursor assembly. This Drosophila melanogaster (Fruit fly) protein is GPI mannosyltransferase 4.